A 430-amino-acid chain; its full sequence is Adenylosuccinate synthetase (430 aa).

GTP is bound by residues 12-18 and 40-42; these read GDEGKGK and GHT. Residue D13 is the Proton acceptor of the active site. Mg(2+) contacts are provided by D13 and G40. Residues 13–16, 38–41, T130, R144, Q224, T239, and R303 contribute to the IMP site; these read DEGK and NAGH. The active-site Proton donor is the H41. A substrate-binding site is contributed by 299 to 305; that stretch reads TTTGRKR. GTP-binding positions include R305, 331-333, and 413-415; these read KLD and STS.

The protein belongs to the adenylosuccinate synthetase family. As to quaternary structure, homodimer. Mg(2+) serves as cofactor.

It localises to the cytoplasm. The enzyme catalyses IMP + L-aspartate + GTP = N(6)-(1,2-dicarboxyethyl)-AMP + GDP + phosphate + 2 H(+). The protein operates within purine metabolism; AMP biosynthesis via de novo pathway; AMP from IMP: step 1/2. Its function is as follows. Plays an important role in the de novo pathway of purine nucleotide biosynthesis. Catalyzes the first committed step in the biosynthesis of AMP from IMP. The chain is Adenylosuccinate synthetase from Ruegeria pomeroyi (strain ATCC 700808 / DSM 15171 / DSS-3) (Silicibacter pomeroyi).